We begin with the raw amino-acid sequence, 151 residues long: 16.9 kDa class I heat shock protein 1 (151 aa).

The sHSP domain maps to 37 to 151 (ETAAFANARV…PEVKAIEISG (115 aa)).

This sequence belongs to the small heat shock protein (HSP20) family. May form oligomeric structures.

It is found in the cytoplasm. The chain is 16.9 kDa class I heat shock protein 1 (hsp16.9A) from Triticum aestivum (Wheat).